The following is a 711-amino-acid chain: Protein ACTIVITY OF BC1 COMPLEX KINASE 3, chloroplastic (711 aa).

Residues methionine 1–arginine 42 constitute a chloroplast transit peptide. Residues serine 216 to phenylalanine 546 form the Protein kinase domain. Residues isoleucine 222 to valine 230 and lysine 245 each bind ATP. Aspartate 379 serves as the catalytic Proton acceptor.

The protein belongs to the protein kinase superfamily. ADCK protein kinase family. Interacts with ABC1K1 in plastoglobules (PG). Interacts with PGM48.

It is found in the plastid. Its subcellular location is the chloroplast. It localises to the plastoglobule. The enzyme catalyses L-seryl-[protein] + ATP = O-phospho-L-seryl-[protein] + ADP + H(+). It carries out the reaction L-threonyl-[protein] + ATP = O-phospho-L-threonyl-[protein] + ADP + H(+). In terms of biological role, kinase that can phosphorylate the tocopherol cyclase VTE1, a key enzyme of tocopherol (vitamin E) metabolism and involved in the recycling of oxidated alpha-tocopherol quinone, possibly stabilizing it at plastoglobules. Also regulates membrane prenylquinone composition. Required for photooxidative stress responses to prevent photosystem II core and chlorophyll degradations. Together with ABC1K1, contributes to plastoglobule (PG) function in prenyl-lipid metabolism, stress response, and thylakoid remodeling. Promotes photodamage of chloroplasts under continuous red light, thus working in opposition to ABC1K1. The sequence is that of Protein ACTIVITY OF BC1 COMPLEX KINASE 3, chloroplastic from Arabidopsis thaliana (Mouse-ear cress).